The following is a 143-amino-acid chain: uncharacterized protein (143 aa).

The interval 1–21 (MAAMDTGQRADPSNPGDKEGD) is disordered.

This is an uncharacterized protein from Homo sapiens (Human).